Here is a 501-residue protein sequence, read N- to C-terminus: Lysine--tRNA ligase (501 aa).

Glu404 and Glu411 together coordinate Mg(2+).

Belongs to the class-II aminoacyl-tRNA synthetase family. As to quaternary structure, homodimer. Mg(2+) is required as a cofactor.

The protein resides in the cytoplasm. The enzyme catalyses tRNA(Lys) + L-lysine + ATP = L-lysyl-tRNA(Lys) + AMP + diphosphate. The polypeptide is Lysine--tRNA ligase (lysS) (Campylobacter jejuni subsp. jejuni serotype O:2 (strain ATCC 700819 / NCTC 11168)).